Here is a 283-residue protein sequence, read N- to C-terminus: Plasma membrane ascorbate-dependent reductase CYBRD1 (283 aa).

Residues 1 to 5 are Cytoplasmic-facing; that stretch reads MEGYK. A helical membrane pass occupies residues 6–30; the sequence is SFLVFLVSSLLLGFLGVIFTLVWVL. The region spanning 13–218 is the Cytochrome b561 domain; it reads SSLLLGFLGV…FGGLVVWMVT (206 aa). The Extracellular segment spans residues 31-45; sequence HWREGLGWDGGAAEF. Residues 46-67 form a helical membrane-spanning segment; it reads NWHPVLVTSGFIFIQGIAIIVY. The heme b site is built by histidine 48, arginine 68, and lysine 77. Residues 68–76 lie on the Cytoplasmic side of the membrane; the sequence is RLPWTWNCS. Lysine 77 and lysine 81 together coordinate L-ascorbate. A helical membrane pass occupies residues 77 to 103; sequence KLLMKFIHAGLHLTAFVFTIVALVAVF. Histidine 84 contacts heme b. Topologically, residues 104–116 are extracellular; that stretch reads DFHNAKNIPNMYS. Position 106 (histidine 106) interacts with Fe(3+). Heme b-binding positions include 113 to 116 and histidine 118; that span reads NMYS. Residues 117 to 142 form a helical membrane-spanning segment; sequence LHSWIGLTVVILYALQLVLGVSIYLL. Residues 143-149 lie on the Cytoplasmic side of the membrane; that stretch reads PFARDTL. Arginine 150 provides a ligand contact to L-ascorbate. Residues 150–177 form a helical membrane-spanning segment; sequence RAALMPVHVYSGLLIFGTVIATALMGIT. Heme b contacts are provided by histidine 157 and glutamate 178. Residues 178–195 are Extracellular-facing; it reads EKLIFSLKEPPYSKMPPE. The chain crosses the membrane as a helical span at residues 196–220; it reads AIFVNTFGLIILVFGGLVVWMVTTP. Over 221 to 283 the chain is Cytoplasmic; it reads AWKRPREQEI…LDDAGQRSTM (63 aa). A heme b-binding site is contributed by lysine 223. Positions 234-263 are disordered; it reads NPTVSSPDGTEEGSTITDCSNTEKSDVELN. Residues 235–253 are compositionally biased toward polar residues; it reads PTVSSPDGTEEGSTITDCS. Residues 254 to 263 are compositionally biased toward basic and acidic residues; the sequence is NTEKSDVELN.

In terms of assembly, homodimer. The cofactor is heme b.

It is found in the cell membrane. Its subcellular location is the apical cell membrane. It catalyses the reaction Fe(3+)(out) + L-ascorbate(in) = monodehydro-L-ascorbate radical(in) + Fe(2+)(out) + H(+). It carries out the reaction Cu(2+)(out) + L-ascorbate(in) = Cu(+)(out) + monodehydro-L-ascorbate radical(in) + H(+). The enzyme catalyses monodehydro-L-ascorbate radical(out) + L-ascorbate(in) = monodehydro-L-ascorbate radical(in) + L-ascorbate(out). In terms of biological role, plasma membrane reductase that uses cytoplasmic ascorbate as an electron donor to reduce extracellular Fe(3+) into Fe(2+). It is also able to reduce extracellular monodehydro-L-ascorbate and may be involved in extracellular ascorbate regeneration. May also function as a cupric transmembrane reductase. The protein is Plasma membrane ascorbate-dependent reductase CYBRD1 (cybrd1) of Xenopus tropicalis (Western clawed frog).